The following is a 324-amino-acid chain: Glycerol-3-phosphate dehydrogenase [NAD(P)+] (324 aa).

Residues Ser-10, Phe-11, Arg-31, and Lys-106 each contribute to the NADPH site. The sn-glycerol 3-phosphate site is built by Lys-106, Gly-134, and Ser-136. Ala-138 lines the NADPH pocket. Sn-glycerol 3-phosphate-binding residues include Lys-189, Asp-244, Ser-254, Arg-255, and Asn-256. The active-site Proton acceptor is Lys-189. Arg-255 provides a ligand contact to NADPH. NADPH-binding residues include Ile-279 and Glu-281.

It belongs to the NAD-dependent glycerol-3-phosphate dehydrogenase family.

The protein resides in the cytoplasm. It catalyses the reaction sn-glycerol 3-phosphate + NAD(+) = dihydroxyacetone phosphate + NADH + H(+). The enzyme catalyses sn-glycerol 3-phosphate + NADP(+) = dihydroxyacetone phosphate + NADPH + H(+). Its pathway is membrane lipid metabolism; glycerophospholipid metabolism. Its function is as follows. Catalyzes the reduction of the glycolytic intermediate dihydroxyacetone phosphate (DHAP) to sn-glycerol 3-phosphate (G3P), the key precursor for phospholipid synthesis. This is Glycerol-3-phosphate dehydrogenase [NAD(P)+] from Ehrlichia canis (strain Jake).